Reading from the N-terminus, the 4076-residue chain is E3 ubiquitin-protein ligase TOM1-like (4076 aa).

Positions 225 to 237 (SSAAPAVSAGSTA) are enriched in low complexity. 17 disordered regions span residues 225–256 (SSAA…KNVA), 288–360 (YPDT…RDGP), 748–819 (IPAE…ILPS), 921–970 (LEAP…NKPA), 1083–1103 (SPVQ…SSGT), 1571–1646 (MALD…ITRE), 1988–2041 (PADA…KRPI), 2067–2110 (NVPA…KLAK), 2275–2295 (EGDK…IGRS), 2356–2551 (SGTA…ELDY), 2581–2634 (GDDL…LLAP), 2782–2817 (IPIP…ESTH), 2858–2955 (EKAR…QAED), 3037–3066 (EQHE…ASIL), 3105–3132 (RQLH…GAGT), 3216–3241 (KQLK…NNNG), and 3353–3444 (EEQA…QLTP). Residues 238 to 250 (KAKDKEKEKEKAT) are compositionally biased toward basic and acidic residues. Residues 311-320 (TTSSPAAPTP) are compositionally biased toward low complexity. Positions 322-343 (RRSSTMNVSQSSRTQRVGSSEE) are enriched in polar residues. Over residues 767 to 778 (EGNDADDDSEDD) the composition is skewed to acidic residues. The span at 940–950 (VKGKGKEKATD) shows a compositional bias: basic and acidic residues. Over residues 959 to 969 (ASSSSSGNNKP) the composition is skewed to polar residues. Over residues 1606 to 1620 (PGTSRETNVGASTTA) the composition is skewed to polar residues. Over residues 1621–1632 (PQQLPVLPSQQP) the composition is skewed to low complexity. The segment covering 1633–1642 (ATESQSNTPR) has biased composition (polar residues). Residues 2021–2041 (VTDKDMHDAPKNPAQDLKRPI) are compositionally biased toward basic and acidic residues. Over residues 2086 to 2096 (NEATPSPSGDE) the composition is skewed to polar residues. A compositionally biased stretch (basic and acidic residues) spans 2099 to 2110 (SESKEKEKKLAK). Acidic residues-rich tracts occupy residues 2378-2387 (DLTDDREETP) and 2405-2450 (EFSD…DLGE). Residues 2460 to 2469 (QPGVVEVLMG) show a composition bias toward low complexity. Composition is skewed to acidic residues over residues 2470-2516 (ENDD…DLED) and 2523-2551 (EEGN…ELDY). A compositionally biased stretch (basic and acidic residues) spans 2587 to 2597 (EPIRDFDGHYI). Residues 2598 to 2622 (DDDEDGEEDDDEDEGEDDMDDDMYF) are compositionally biased toward acidic residues. Composition is skewed to basic and acidic residues over residues 2788-2803 (HSRE…DTYQ) and 2858-2912 (EKAR…ERAE). Positions 2851 to 2929 (AIQAEKEEKA…QAAADQEANA (79 aa)) form a coiled coil. The segment covering 2913-2927 (AAAQAAAQAAADQEA) has biased composition (low complexity). The span at 3037 to 3047 (EQHEQRRRERQ) shows a compositional bias: basic and acidic residues. Residues 3108-3117 (HAQQGGQAAS) are compositionally biased toward polar residues. Residues 3341 to 3375 (PLQAIERRRKEAEEQAKKKKEAEEKAATEREAANA) are a coiled coil. The span at 3353–3372 (EEQAKKKKEAEEKAATEREA) shows a compositional bias: basic and acidic residues. Low complexity predominate over residues 3373-3414 (ANAPEEQASTSTEQTPAQQEATQQPSESTPAAASGQQPAQQD). Residues 3415 to 3439 (QENKELEAPKEKADEKDVQSDEKKI) are compositionally biased toward basic and acidic residues. An HECT domain is found at 3740–4076 (KADELKFGKL…TAGSDYFGFA (337 aa)). Cys4043 functions as the Glycyl thioester intermediate in the catalytic mechanism.

It belongs to the UPL family. TOM1/PTR1 subfamily.

The protein resides in the nucleus. The catalysed reaction is S-ubiquitinyl-[E2 ubiquitin-conjugating enzyme]-L-cysteine + [acceptor protein]-L-lysine = [E2 ubiquitin-conjugating enzyme]-L-cysteine + N(6)-ubiquitinyl-[acceptor protein]-L-lysine.. Its pathway is protein modification; protein ubiquitination. In terms of biological role, probable ubiquitin ligase protein, which may be involved in mRNA export. E3 ubiquitin ligase proteins mediate ubiquitination and subsequent proteasomal degradation of target proteins. Participates in mRNA export from the nucleus by regulating the transport of hnRNP proteins. In Neurospora crassa (strain ATCC 24698 / 74-OR23-1A / CBS 708.71 / DSM 1257 / FGSC 987), this protein is E3 ubiquitin-protein ligase TOM1-like.